Consider the following 55-residue polypeptide: Ribosome biogenesis protein Nop10 (55 aa).

This sequence belongs to the NOP10 family.

Functionally, involved in ribosome biogenesis; more specifically in 18S rRNA pseudouridylation and in cleavage of pre-rRNA. The chain is Ribosome biogenesis protein Nop10 from Methanosphaera stadtmanae (strain ATCC 43021 / DSM 3091 / JCM 11832 / MCB-3).